We begin with the raw amino-acid sequence, 316 residues long: Very-long-chain 3-oxooacyl-coA reductase let-767 (316 aa).

Residues 52-80 (ITGA…VSRT) and Asp106 each bind NADP(+). A substrate-binding site is contributed by Ser189. The active-site Proton acceptor is Tyr202. Lys206 serves as a coordination point for NADP(+).

It belongs to the short-chain dehydrogenases/reductases (SDR) family. 17-beta-HSD 3 subfamily.

The enzyme catalyses a very-long-chain (3R)-3-hydroxyacyl-CoA + NADP(+) = a very-long-chain 3-oxoacyl-CoA + NADPH + H(+). It participates in lipid metabolism; fatty acid biosynthesis. Required for branched chain fatty acid synthesis. Catalyzes the reduction of the 3-ketoacyl-CoA intermediate that is formed in each cycle of fatty acid elongation. Very long-chain fatty acids (VLCFAs) serve as precursors for ceramide and sphingolipids. May also be required for sterol hormone production. The polypeptide is Very-long-chain 3-oxooacyl-coA reductase let-767 (Caenorhabditis briggsae).